An 863-amino-acid chain; its full sequence is Leucine-rich repeat and death domain-containing protein 1 (863 aa).

Disordered stretches follow at residues 1–37 (MSEKEGMSEELEDTISQFRKESRSQSVKEPGFIKETS) and 51–100 (SSNQ…SQSL). Over residues 88–100 (SETSTRTETSQSL) the composition is skewed to low complexity. LRR repeat units lie at residues 143-166 (CKDNFTVNLEAKGLQEFPKDILKI), 167-189 (KYVKHLYLDKNQIKTFQGADSGD), 190-213 (LLGLEILSLQENGLSSLPSEIQLL), 214-236 (HNLRILNVSHNHISHIPKEISQL), 238-259 (NIRQLFFYNNYIENFPSDLECL), 260-282 (GNLEILSLGKNKLRHIPDTLPSL), 284-305 (YLRVLNLEYNQLTIFPKALCFL), 306-328 (PKLISLDLTGNLISSLPKEIREL), 329-351 (KNLETLLLDHNKLTFLAVEIFQL), 353-374 (KIKELQLADNKLEVISHKIENF), 375-397 (RELRILILDKNLLKNIPEKICCC), 398-420 (AMLECLTLSDNKLTELPKNIHKL), 422-443 (NLRKLHVNRNNMVKITDSISHL), 445-466 (NICSLEFSGNIIAGIPIEIKNC), 468-489 (KIIKIELNYNKIMYFPLGLCAL), 490-513 (DSLYYLSVNGNYISEIPADISFSK), 515-535 (LLHLELSENKLLIFSEHFCSL), 536-558 (INLKYLDLGKNQIKKIPASISNM), 560-581 (SLHVLILCCNKFETFPRELCTL), 582-604 (ENLRVLDLSENQLQKISSDICNL), 606-627 (RIQKLNFSSNQFIHFPIELCQL), 630-653 (LEQLNISQIKGRKLTRLPGELSNM), 654-676 (TQLKELDISNNAIREIPRNIGEL), 678-699 (NLVSLHAYNNQISYIPPSLLSL), 700-722 (NDLQQLNLSGNNLTALPSAIYNL), and 724-745 (SLKEINFDDNPLLRPPMEICKG). One can recognise a Death domain in the interval 767–855 (EKIFKIVANN…EIMDKITALN (89 aa)). The LRR 27 repeat unit spans residues 856–863 (LFTRAIKF).

The chain is Leucine-rich repeat and death domain-containing protein 1 (LRRD1) from Macaca fascicularis (Crab-eating macaque).